We begin with the raw amino-acid sequence, 455 residues long: Deoxyribodipyrimidine photo-lyase (455 aa).

The Photolyase/cryptochrome alpha/beta domain occupies Ser-2–Thr-131. FAD is bound by residues Tyr-219 and Thr-231–Ser-235. Interaction with DNA regions lie at residues Gln-266–His-273 and Asn-330–Arg-331. Residue Asp-361–Asp-363 participates in FAD binding. Gln-392 contributes to the DNA binding site.

Belongs to the DNA photolyase class-1 family. In terms of assembly, monomer. The cofactor is FAD. Coenzyme F420-(gamma-Glu)n is required as a cofactor.

It catalyses the reaction cyclobutadipyrimidine (in DNA) = 2 pyrimidine residues (in DNA).. In terms of biological role, involved in repair of UV radiation-induced DNA damage. Catalyzes the light-dependent monomerization (300-600 nm) of cyclobutyl pyrimidine dimers (in cis-syn configuration), which are formed between adjacent bases on the same DNA strand upon exposure to ultraviolet radiation. The polypeptide is Deoxyribodipyrimidine photo-lyase (phr) (Streptomyces griseus).